The following is a 160-amino-acid chain: Transcription elongation factor GreA (160 aa).

A coiled-coil region spans residues 12-76; sequence EGVKKLEEEL…QLENMLKNAS (65 aa).

The protein belongs to the GreA/GreB family.

Its function is as follows. Necessary for efficient RNA polymerase transcription elongation past template-encoded arresting sites. The arresting sites in DNA have the property of trapping a certain fraction of elongating RNA polymerases that pass through, resulting in locked ternary complexes. Cleavage of the nascent transcript by cleavage factors such as GreA or GreB allows the resumption of elongation from the new 3'terminus. GreA releases sequences of 2 to 3 nucleotides. The protein is Transcription elongation factor GreA of Clostridium botulinum (strain Kyoto / Type A2).